The chain runs to 602 residues: RecBCD enzyme subunit RecD (602 aa).

Residue Gly171–Thr178 coordinates ATP.

Belongs to the RecD family. In terms of assembly, heterotrimer of RecB, RecC and RecD. All subunits contribute to DNA-binding.

It catalyses the reaction Couples ATP hydrolysis with the unwinding of duplex DNA at the replication fork by translocating in the 5'-3' direction. This creates two antiparallel DNA single strands (ssDNA). The leading ssDNA polymer is the template for DNA polymerase III holoenzyme which synthesizes a continuous strand.. The catalysed reaction is ATP + H2O = ADP + phosphate + H(+). In terms of biological role, a helicase/nuclease that prepares dsDNA breaks (DSB) for recombinational DNA repair. Binds to DSBs and unwinds DNA via a highly rapid and processive ATP-dependent bidirectional helicase activity. Unwinds dsDNA until it encounters a Chi (crossover hotspot instigator) sequence from the 3' direction. Cuts ssDNA a few nucleotides 3' to the Chi site. The properties and activities of the enzyme are changed at Chi. The Chi-altered holoenzyme produces a long 3'-ssDNA overhang and facilitates RecA-binding to the ssDNA for homologous DNA recombination and repair. Holoenzyme degrades any linearized DNA that is unable to undergo homologous recombination. In the holoenzyme this subunit has ssDNA-dependent ATPase and 5'-3' helicase activity. When added to pre-assembled RecBC greatly stimulates nuclease activity and augments holoenzyme processivity. Negatively regulates the RecA-loading ability of RecBCD. This is RecBCD enzyme subunit RecD from Buchnera aphidicola subsp. Acyrthosiphon pisum (strain APS) (Acyrthosiphon pisum symbiotic bacterium).